The primary structure comprises 240 residues: 7-cyano-7-deazaguanine synthase (240 aa).

18–28 (FSGGQDSTTCL) contributes to the ATP binding site. The Zn(2+) site is built by Cys-197, Cys-206, Cys-209, and Cys-212.

The protein belongs to the QueC family. Zn(2+) is required as a cofactor.

It carries out the reaction 7-carboxy-7-deazaguanine + NH4(+) + ATP = 7-cyano-7-deazaguanine + ADP + phosphate + H2O + H(+). It functions in the pathway purine metabolism; 7-cyano-7-deazaguanine biosynthesis. In terms of biological role, catalyzes the ATP-dependent conversion of 7-carboxy-7-deazaguanine (CDG) to 7-cyano-7-deazaguanine (preQ(0)). This chain is 7-cyano-7-deazaguanine synthase, found in Shewanella baltica (strain OS223).